The primary structure comprises 690 residues: Adhesion G protein-coupled receptor L4 (690 aa).

Positions 1–19 (MKRLPLLVVFSTLLNCSYT) are cleaved as a signal peptide. The EGF-like 1 domain maps to 20-57 (QNCTKTPCLPNAKCEIRNGIEACYCNMGFSGNGVTICE). Topologically, residues 20–432 (QNCTKTPCLP…DYNILTRITQ (413 aa)) are extracellular. N-linked (GlcNAc...) asparagine glycosylation is present at Asn-21. 6 disulfides stabilise this stretch: Cys-22–Cys-33, Cys-27–Cys-42, Cys-44–Cys-56, Cys-62–Cys-75, Cys-69–Cys-84, and Cys-86–Cys-107. In terms of domain architecture, EGF-like 2; calcium-binding spans 58 to 108 (DDNECGNLTQSCGENANCTNTEGSYYCMCVPGFRSSSNQDRFITNDGTVCI). 2 N-linked (GlcNAc...) asparagine glycosylation sites follow: Asn-64 and Asn-74. Residues Asn-127, Asn-177, Asn-188, Asn-249, Asn-381, and Asn-395 are each glycosylated (N-linked (GlcNAc...) asparagine). Residues 244–419 (TEFDTNSTDI…AILMSSGPSI (176 aa)) form the GAIN-B domain. Intrachain disulfides connect Cys-370–Cys-401 and Cys-389–Cys-403. The GPS stretch occupies residues 370-419 (CAFWNYSPDTMNGSWSSEGCELTYSNETHTSCRCNHLTHFAILMSSGPSI). The helical transmembrane segment at 433–453 (LGIIISLICLAICIFTFWFFS) threads the bilayer. Residues 454–460 (EIQSTRT) lie on the Cytoplasmic side of the membrane. A helical membrane pass occupies residues 461-481 (TIHKNLCCSLFLAELVFLVGI). Residues 482–499 (NTNTNKLFCSIIAGLLHY) lie on the Extracellular side of the membrane. Residues 500-520 (FFLAAFAWMCIEGIHLYLIVV) traverse the membrane as a helical segment. Residues 521–532 (GVIYNKGFLHKN) are Cytoplasmic-facing. The helical transmembrane segment at 533 to 553 (FYIFGYLSPAVVVGFSAALGY) threads the bilayer. Residues 554-573 (RYYGTTKVCWLSTENNFIWS) are Extracellular-facing. The chain crosses the membrane as a helical span at residues 574–594 (FIGPACLIILVNLLAFGVIIY). At 595–618 (KVFRHTAGLKPEVSCFENIRSCAR) the chain is on the cytoplasmic side. The helical transmembrane segment at 619–639 (GALALLFLLGTTWIFGVLHVV) threads the bilayer. Over 640–646 (HASVVTA) the chain is Extracellular. Residues 647–667 (YLFTVSNAFQGMFIFLFLCVL) form a helical membrane-spanning segment. Topologically, residues 668-690 (SRKIQEEYYRLFKNVPCCFGCLR) are cytoplasmic.

This sequence belongs to the G-protein coupled receptor 2 family. Adhesion G-protein coupled receptor (ADGR) subfamily. In terms of assembly, heterodimer of 2 chains generated by proteolytic processing; the large extracellular N-terminal fragment and the membrane-bound C-terminal fragment predominantly remain associated and non-covalently linked. Post-translationally, glycosylated. Proteolytically cleaved into 2 subunits, an extracellular alpha subunit and a seven-transmembrane subunit. In terms of tissue distribution, detected in the majority of epithelial cells in tumor and normal tissues. Expressed also in human umbilical vein endothelial cells.

It is found in the cell membrane. In terms of biological role, endothelial orphan receptor that acts as a key regulator of angiogenesis. The sequence is that of Adhesion G protein-coupled receptor L4 from Homo sapiens (Human).